The chain runs to 564 residues: Kelch-like protein 12 (564 aa).

Residues 29–96 (CDVTLRVNLK…VYTETVHVTV (68 aa)) enclose the BTB domain. Positions 131–232 (CLGIRDFAET…LTPRYITDVI (102 aa)) constitute a BACK domain. Kelch repeat units follow at residues 278-325 (VLLV…SLGD), 327-375 (VYVI…TLGD), 376-422 (MIYV…VANG), 423-469 (VIYC…LLND), 471-516 (IYVV…VLRG), and 518-563 (LYAI…VLRE).

Component of the BCR(KLHL12) E3 ubiquitin ligase complex.

Its subcellular location is the cytoplasmic vesicle. The protein localises to the COPII-coated vesicle. It participates in protein modification; protein ubiquitination. Substrate-specific adapter of a BCR (BTB-CUL3-RBX1) E3 ubiquitin ligase complex that acts as a negative regulator of Wnt signaling pathway and ER-Golgi transport. The BCR(KLHL12) complex is involved in ER-Golgi transport by regulating the size of COPII coats, thereby playing a key role in collagen export, which is required for embryonic stem (ES) cells division. The protein is Kelch-like protein 12 (klhl12) of Xenopus laevis (African clawed frog).